Reading from the N-terminus, the 120-residue chain is Small ribosomal subunit protein uS13 (120 aa).

The disordered stretch occupies residues 92–120 (HRKGLPVRGQTTKNNARTRKGKKKTVGSK). Residues 107–120 (ARTRKGKKKTVGSK) show a composition bias toward basic residues.

This sequence belongs to the universal ribosomal protein uS13 family. Part of the 30S ribosomal subunit. Forms a loose heterodimer with protein S19. Forms two bridges to the 50S subunit in the 70S ribosome.

Located at the top of the head of the 30S subunit, it contacts several helices of the 16S rRNA. In the 70S ribosome it contacts the 23S rRNA (bridge B1a) and protein L5 of the 50S subunit (bridge B1b), connecting the 2 subunits; these bridges are implicated in subunit movement. Contacts the tRNAs in the A and P-sites. This Helicobacter pylori (strain J99 / ATCC 700824) (Campylobacter pylori J99) protein is Small ribosomal subunit protein uS13.